A 66-amino-acid polypeptide reads, in one-letter code: U10-theraphotoxin-Cg1a 3 (66 aa).

Positions 1 to 21 (MKTSVLFVIFGLALLFCLSFA) are cleaved as a signal peptide. A propeptide spanning residues 22-29 (DELEDTGR) is cleaved from the precursor. Disulfide bonds link Cys31–Cys46, Cys38–Cys51, and Cys45–Cys58.

Belongs to the neurotoxin 10 (Hwtx-1) family. 29 (Jztx-13) subfamily. Expressed by the venom gland.

It localises to the secreted. Probable ion channel inhibitor. The protein is U10-theraphotoxin-Cg1a 3 of Chilobrachys guangxiensis (Chinese earth tiger tarantula).